The following is a 165-amino-acid chain: Small ribosomal subunit protein uS5 (165 aa).

In terms of domain architecture, S5 DRBM spans 10–73 (QIEKLISLNR…TSARKNLRFV (64 aa)).

The protein belongs to the universal ribosomal protein uS5 family. Part of the 30S ribosomal subunit. Contacts proteins S4 and S8.

Its function is as follows. With S4 and S12 plays an important role in translational accuracy. Functionally, located at the back of the 30S subunit body where it stabilizes the conformation of the head with respect to the body. The chain is Small ribosomal subunit protein uS5 from Borreliella afzelii (strain PKo) (Borrelia afzelii).